The following is a 282-amino-acid chain: Protein-export membrane protein SecF (282 aa).

6 helical membrane passes run 9-29, 120-140, 149-169, 174-194, 214-234, and 236-256; these read IAIP…KGIP, EGFK…YLYF, IILS…LLGI, ATIA…ILLT, KTGL…LIVV, and LFIP…LALI.

The protein belongs to the SecD/SecF family. SecF subfamily. In terms of assembly, part of the protein translocation apparatus. Forms a complex with SecD.

It is found in the cell membrane. In terms of biological role, involved in protein export. This is Protein-export membrane protein SecF from Methanocaldococcus jannaschii (strain ATCC 43067 / DSM 2661 / JAL-1 / JCM 10045 / NBRC 100440) (Methanococcus jannaschii).